A 92-amino-acid polypeptide reads, in one-letter code: Putative regulatory protein CA_C1717 (92 aa).

It belongs to the RemA family.

This Clostridium acetobutylicum (strain ATCC 824 / DSM 792 / JCM 1419 / IAM 19013 / LMG 5710 / NBRC 13948 / NRRL B-527 / VKM B-1787 / 2291 / W) protein is Putative regulatory protein CA_C1717.